Here is a 141-residue protein sequence, read N- to C-terminus: Large ribosomal subunit protein uL11B (141 aa).

It belongs to the universal ribosomal protein uL11 family. Part of the ribosomal stalk of the 50S ribosomal subunit. Interacts with L10 and the large rRNA to form the base of the stalk. L10 forms an elongated spine to which L12 dimers bind in a sequential fashion forming a multimeric L10(L12)X complex. In terms of processing, one or more lysine residues are methylated.

Functionally, forms part of the ribosomal stalk which helps the ribosome interact with GTP-bound translation factors. In Halalkalibacterium halodurans (strain ATCC BAA-125 / DSM 18197 / FERM 7344 / JCM 9153 / C-125) (Bacillus halodurans), this protein is Large ribosomal subunit protein uL11B.